The following is a 445-amino-acid chain: Succinate--CoA ligase [ADP-forming] subunit beta, mitochondrial (445 aa).

The transit peptide at 1 to 17 directs the protein to the mitochondrion; it reads MLSNIVKKTIQSSKNLK. The ATP-grasp domain occupies 43 to 270; the sequence is QKMMKSYGIN…DNAAFRHPDI (228 aa). Residues Lys80 and 87–89 each bind ATP; that span reads GRG. Asn240 and Asp254 together coordinate Mg(2+). Substrate-binding positions include Asn305 and 362–364; that span reads GIM.

This sequence belongs to the succinate/malate CoA ligase beta subunit family. ATP-specific subunit beta subfamily. As to quaternary structure, heterodimer of an alpha and a beta subunit. The beta subunit determines specificity for ATP. Mg(2+) is required as a cofactor.

Its subcellular location is the mitochondrion. It carries out the reaction succinate + ATP + CoA = succinyl-CoA + ADP + phosphate. It participates in carbohydrate metabolism; tricarboxylic acid cycle; succinate from succinyl-CoA (ligase route): step 1/1. In terms of biological role, ATP-specific succinyl-CoA synthetase functions in the citric acid cycle (TCA), coupling the hydrolysis of succinyl-CoA to the synthesis of ATP and thus represents the only step of substrate-level phosphorylation in the TCA. The beta subunit provides nucleotide specificity of the enzyme and binds the substrate succinate, while the binding sites for coenzyme A and phosphate are found in the alpha subunit. The chain is Succinate--CoA ligase [ADP-forming] subunit beta, mitochondrial (scsC) from Dictyostelium discoideum (Social amoeba).